The chain runs to 137 residues: Small ribosomal subunit protein uS12 (137 aa).

The interval 1–57 (MPTINQLVRKPRQSKIKKSDSPALNKGFNSKKKKFTDLNSPQKRGVCTRVGTMTPRK) is disordered. Position 102 is a 3-methylthioaspartic acid (aspartate 102). Residues 118–137 (SGVDGRRQGRSLYGTKKPKN) form a disordered region.

The protein belongs to the universal ribosomal protein uS12 family. Part of the 30S ribosomal subunit. Contacts proteins S8 and S17. May interact with IF1 in the 30S initiation complex.

With S4 and S5 plays an important role in translational accuracy. In terms of biological role, interacts with and stabilizes bases of the 16S rRNA that are involved in tRNA selection in the A site and with the mRNA backbone. Located at the interface of the 30S and 50S subunits, it traverses the body of the 30S subunit contacting proteins on the other side and probably holding the rRNA structure together. The combined cluster of proteins S8, S12 and S17 appears to hold together the shoulder and platform of the 30S subunit. This chain is Small ribosomal subunit protein uS12, found in Staphylococcus aureus (strain COL).